A 236-amino-acid chain; its full sequence is tRNA (guanine-N(7)-)-methyltransferase (236 aa).

Residues 1-17 (MSERKSDPDRDDSERAF) are compositionally biased toward basic and acidic residues. A disordered region spans residues 1–23 (MSERKSDPDRDDSERAFFGRRKG). S-adenosyl-L-methionine contacts are provided by Glu-67, Glu-92, Asp-119, and Asp-141. Residue Asp-141 is part of the active site. Lys-145 and Asp-177 together coordinate substrate.

Belongs to the class I-like SAM-binding methyltransferase superfamily. TrmB family.

The enzyme catalyses guanosine(46) in tRNA + S-adenosyl-L-methionine = N(7)-methylguanosine(46) in tRNA + S-adenosyl-L-homocysteine. It participates in tRNA modification; N(7)-methylguanine-tRNA biosynthesis. Functionally, catalyzes the formation of N(7)-methylguanine at position 46 (m7G46) in tRNA. The chain is tRNA (guanine-N(7)-)-methyltransferase from Bradyrhizobium diazoefficiens (strain JCM 10833 / BCRC 13528 / IAM 13628 / NBRC 14792 / USDA 110).